The chain runs to 363 residues: Protein RecA (363 aa).

Residue 79–86 (GPESSGKT) coordinates ATP.

The protein belongs to the RecA family.

The protein resides in the cytoplasm. Functionally, can catalyze the hydrolysis of ATP in the presence of single-stranded DNA, the ATP-dependent uptake of single-stranded DNA by duplex DNA, and the ATP-dependent hybridization of homologous single-stranded DNAs. It interacts with LexA causing its activation and leading to its autocatalytic cleavage. The chain is Protein RecA from Borrelia duttonii (strain Ly).